The sequence spans 337 residues: Fructose-1,6-bisphosphatase class 1 (337 aa).

Mg(2+) is bound by residues E89, D112, L114, and D115. Substrate contacts are provided by residues 115 to 118 (DGSS), N208, Y241, and K271. E277 lines the Mg(2+) pocket.

It belongs to the FBPase class 1 family. Homotetramer. Mg(2+) is required as a cofactor.

Its subcellular location is the cytoplasm. The catalysed reaction is beta-D-fructose 1,6-bisphosphate + H2O = beta-D-fructose 6-phosphate + phosphate. Its pathway is carbohydrate biosynthesis; gluconeogenesis. The polypeptide is Fructose-1,6-bisphosphatase class 1 (Yersinia pseudotuberculosis serotype O:1b (strain IP 31758)).